The chain runs to 170 residues: Calcineurin subunit B type 2 (170 aa).

4 consecutive EF-hand domains span residues 18–46 (DEIRRLGKRFRKLDLDNSGALSVDEFMSL), 50–85 (QQNPLVQRVIDIFDADGNGEVDFKEFIQGVSQFSVK), 87–122 (DKLSKLRFAFRIYDMDNDGYISNGELFQVLKMMVGN), and 128–163 (QLQQIVDKTIGFADKDEDGKISFDEFCSVVGNTDIH). Aspartate 31, aspartate 33, serine 35, glutamate 42, aspartate 63, aspartate 65, asparagine 67, glutamate 69, glutamate 74, aspartate 100, aspartate 102, aspartate 104, tyrosine 106, glutamate 111, aspartate 141, aspartate 143, aspartate 145, lysine 147, and glutamate 152 together coordinate Ca(2+). A Phosphoserine modification is found at serine 35.

Belongs to the calcineurin regulatory subunit family. In terms of assembly, composed of a catalytic subunit (A) and a regulatory subunit (B). Interacts with sra.

Functionally, calcineurin is a calcium-binding and calmodulin-binding protein found in all cells from yeast to mammals, and a calcium-dependent, calmodulin-stimulated protein phosphatase. The chain is Calcineurin subunit B type 2 (CanB2) from Drosophila melanogaster (Fruit fly).